The primary structure comprises 1131 residues: Kinesin-like protein CG14535 (1131 aa).

The segment covering 1 to 11 has biased composition (polar residues); the sequence is MATTSTSNMSR. A disordered region spans residues 1–25; it reads MATTSTSNMSRNGGFCGALQRAPPP. In terms of domain architecture, Kinesin motor spans 44-396; the sequence is KVKVMLRVAD…IQIASRIHRL (353 aa). 4 disordered regions span residues 472 to 494, 693 to 753, 905 to 926, and 1016 to 1072; these read ALKGSGLEKPPSKSASNSPMMMK, DLPD…SRDI, PAYRLTPSPPKQPSHSPSQGSL, and TSSE…QRHR. Residues 483–494 show a composition bias toward low complexity; sequence SKSASNSPMMMK. A compositionally biased stretch (polar residues) spans 1016-1032; sequence TSSEAYDSGHDSNSTPR.

It belongs to the TRAFAC class myosin-kinesin ATPase superfamily. Kinesin family. KIF26 subfamily.

Its subcellular location is the cytoplasm. The protein resides in the cytoskeleton. This chain is Kinesin-like protein CG14535, found in Drosophila melanogaster (Fruit fly).